Reading from the N-terminus, the 274-residue chain is Lectizyme (274 aa).

The signal sequence occupies residues 1 to 16; that stretch reads MKFFAVFALCVASVSA. In terms of domain architecture, Peptidase S1 spans 32–268; the sequence is IINGHEAEKG…FDKWIEDSIE (237 aa). The cysteines at positions 57 and 73 are disulfide-linked. Catalysis depends on charge relay system residues His-72 and Asp-119. 2 disulfides stabilise this stretch: Cys-188–Cys-204 and Cys-215–Cys-244. Ser-219 functions as the Charge relay system in the catalytic mechanism.

It belongs to the peptidase S1 family. Expressed in the midgut.

It is found in the secreted. In terms of biological role, protein with lectin and protease activity involved in the establishment of trypanosome infections in tsetse flies. Binds D-glucosamine and agglutinates bloodstream-form trypanosomes and rabbit red blood cells. Capable of inducing transformation of bloodstream-form trypanosomes into procyclic (midgut) forms in vitro. In Glossina austeni (Savannah tsetse fly), this protein is Lectizyme (Gpl).